Reading from the N-terminus, the 100-residue chain is Small ribosomal subunit protein uS14c (100 aa).

It belongs to the universal ribosomal protein uS14 family. As to quaternary structure, part of the 30S ribosomal subunit.

It is found in the plastid. It localises to the chloroplast. Functionally, binds 16S rRNA, required for the assembly of 30S particles. The sequence is that of Small ribosomal subunit protein uS14c from Lobularia maritima (Sweet alyssum).